The following is a 479-amino-acid chain: Catalase A (479 aa).

Over residues 1–21 (MSKILTTASGAPVADNQNSRS) the composition is skewed to polar residues. The interval 1 to 25 (MSKILTTASGAPVADNQNSRSAGPR) is disordered. Catalysis depends on residues H53 and N126. Y336 is a binding site for heme. The disordered stretch occupies residues 350–376 (QLPVNAPRCPVNSYQRDGSMATGSYGS). Residues 361–376 (NSYQRDGSMATGSYGS) show a composition bias toward polar residues.

Belongs to the catalase family. Heme is required as a cofactor.

It carries out the reaction 2 H2O2 = O2 + 2 H2O. Its activity is regulated as follows. Activated by peroxide. Functionally, the major expressed catalase protein in strain Corvallis in stationary phase. Decomposes hydrogen peroxide into water and oxygen; serves to protect cells from the toxic effects of hydrogen peroxide. The sequence is that of Catalase A (katA) from Pseudomonas putida (Arthrobacter siderocapsulatus).